Reading from the N-terminus, the 329-residue chain is Calponin-3 (329 aa).

Position 23 is an N6-acetyllysine (Lys23). The Calponin-homology (CH) domain maps to 26–130 (HQAEEDLRNW…TLVALAGLAK (105 aa)). Lys158 is subject to N6-methyllysine. 3 Calponin-like repeats span residues 164-189 (IGLQMGTNKCASQAGMTAYGTRRHLY), 204-229 (ISLQMGTNKGASQAGMLAPGTRRDIY), and 243-268 (ISLQMGTNKVASQKGMSVYGLGRQVY). The segment at 279-329 (PVIHNGSQGTGTNGSEISDSDYQAEYPDEYHGEYQDDYPRDYQYSDQGIDY) is disordered. A compositionally biased stretch (basic and acidic residues) spans 306–318 (DEYHGEYQDDYPR). Phosphoserine is present on Ser323.

It belongs to the calponin family. In terms of tissue distribution, expressed in both non-smooth muscle tissues as well as smooth muscle tissues.

Thin filament-associated protein that is implicated in the regulation and modulation of smooth muscle contraction. It is capable of binding to actin, calmodulin and tropomyosin. The interaction of calponin with actin inhibits the actomyosin Mg-ATPase activity. This is Calponin-3 (CNN3) from Homo sapiens (Human).